The primary structure comprises 214 residues: Peptide methionine sulfoxide reductase MsrA 2 (214 aa).

The active site involves C45.

This sequence belongs to the MsrA Met sulfoxide reductase family.

It catalyses the reaction L-methionyl-[protein] + [thioredoxin]-disulfide + H2O = L-methionyl-(S)-S-oxide-[protein] + [thioredoxin]-dithiol. It carries out the reaction [thioredoxin]-disulfide + L-methionine + H2O = L-methionine (S)-S-oxide + [thioredoxin]-dithiol. Has an important function as a repair enzyme for proteins that have been inactivated by oxidation. Catalyzes the reversible oxidation-reduction of methionine sulfoxide in proteins to methionine. The chain is Peptide methionine sulfoxide reductase MsrA 2 (msrA2) from Synechocystis sp. (strain ATCC 27184 / PCC 6803 / Kazusa).